Consider the following 374-residue polypeptide: Nuclear hormone receptor family member nhr-57 (374 aa).

Positions 7–84 form a DNA-binding region, nuclear receptor; the sequence is RKYCSVCHQL…VGMNPEVVQA (78 aa). NR C4-type zinc fingers lie at residues 10–30 and 48–67; these read CSVC…CKAC and CRKK…CKSC. The NR LBD domain maps to 124–374; sequence QMTPTLCGVM…DKIYKIIDGQ (251 aa).

The protein belongs to the nuclear hormone receptor family.

It is found in the nucleus. In terms of biological role, orphan nuclear receptor. The chain is Nuclear hormone receptor family member nhr-57 (nhr-57) from Caenorhabditis elegans.